Consider the following 352-residue polypeptide: Guanine nucleotide-binding protein alpha-7 subunit (352 aa).

Gly2 is lipidated: N-myristoyl glycine. The S-palmitoyl cysteine moiety is linked to residue Cys4. One can recognise a G-alpha domain in the interval 32–352 (RIIKLLLLGA…AKNLKSMGLC (321 aa)). The tract at residues 35–48 (KLLLLGAGESGKST) is G1 motif. GTP-binding positions include 40–47 (GAGESGKS), 174–180 (LRTRIKT), 199–203 (DVGGQ), 268–271 (NKKD), and Ala324. Mg(2+)-binding residues include Ser47 and Thr180. The segment at 172–180 (DLLRTRIKT) is G2 motif. A G3 motif region spans residues 195–204 (FRVIDVGGQR). The tract at residues 264 to 271 (ILFLNKKD) is G4 motif. Residues 322–327 (TCATDT) are G5 motif.

It belongs to the G-alpha family. G(i/o/t/z) subfamily. G proteins are composed of 3 units; alpha, beta and gamma. The alpha chain contains the guanine nucleotide binding site.

Its function is as follows. Guanine nucleotide-binding proteins (G proteins) are involved as modulators or transducers in various transmembrane signaling systems. The chain is Guanine nucleotide-binding protein alpha-7 subunit (gpa-7) from Caenorhabditis elegans.